Here is a 192-residue protein sequence, read N- to C-terminus: UPF0312 protein PputGB1_5030 (192 aa).

An N-terminal signal peptide occupies residues 1-23 (MLKKTFAALALGTALLSAGQAMA).

Belongs to the UPF0312 family. Type 1 subfamily.

The protein localises to the periplasm. This Pseudomonas putida (strain GB-1) protein is UPF0312 protein PputGB1_5030.